The chain runs to 212 residues: Minor capsid protein VP2 (212 aa).

It belongs to the norovirus VP2 family. In terms of assembly, homooligomer. The portal-like structure consists in 12 copies of VP2. Interacts with capsid protein VP1.

The protein localises to the virion. The protein resides in the host cytoplasm. Its function is as follows. Minor structural protein that forms a portal-like structure at a unique three-fold axis of symmetry, following binding to the host receptor. The channel formed by VP2 may allow the delivery of the viral genome through the host endosomal membrane. The protein is Minor capsid protein VP2 of Norovirus (strain Human/NoV/United States/Norwalk/1968/GI) (Hu/NV/NV/1968/US).